The following is a 500-amino-acid chain: NAD(P)H-quinone oxidoreductase chain 4, chloroplastic (500 aa).

Transmembrane regions (helical) follow at residues 4 to 24 (FPWL…IFFL), 37 to 57 (ICIC…HFQL), 87 to 107 (IGPI…AWPI), 113 to 130 (LFHF…GSFS), 134 to 154 (LLLF…LLAM), 167 to 187 (FILY…GVAL), 208 to 228 (VLEI…LPII), 242 to 262 (HYST…YGLI), 272 to 292 (AHSI…IYAA), 305 to 325 (IAYS…SLTD), 330 to 350 (GALL…FLAG), 386 to 406 (LALP…GIIT), 411 to 431 (VLIP…LTPI), and 462 to 482 (LFLS…PDFV).

Belongs to the complex I subunit 4 family.

The protein resides in the plastid. It localises to the chloroplast thylakoid membrane. The catalysed reaction is a plastoquinone + NADH + (n+1) H(+)(in) = a plastoquinol + NAD(+) + n H(+)(out). The enzyme catalyses a plastoquinone + NADPH + (n+1) H(+)(in) = a plastoquinol + NADP(+) + n H(+)(out). The sequence is that of NAD(P)H-quinone oxidoreductase chain 4, chloroplastic from Atropa belladonna (Belladonna).